A 142-amino-acid polypeptide reads, in one-letter code: Relaxin-3 (142 aa).

Residues 1–25 (MARYMLLLLLAVWVLTGELWPGAEA) form the signal peptide. 3 cysteine pairs are disulfide-bonded: Cys-35/Cys-129, Cys-47/Cys-142, and Cys-128/Cys-133. Positions 55–118 (SDILAHEAMG…GTPGVLRGSR (64 aa)) are cleaved as a propeptide — connecting peptide.

The protein belongs to the insulin family. Heterodimer of a B chain and an A chain linked by two disulfide bonds.

The protein localises to the secreted. Its function is as follows. May play a role in neuropeptide signaling processes. Ligand for LGR7, RXFP3 and RXFP4. This chain is Relaxin-3 (RLN3), found in Homo sapiens (Human).